The chain runs to 187 residues: Interferon alpha-3 (187 aa).

The first 23 residues, 1–23 (MALPCSFSVALVLLSCHSLCCLA), serve as a signal peptide directing secretion. 2 cysteine pairs are disulfide-bonded: cysteine 24/cysteine 122 and cysteine 52/cysteine 160. N-linked (GlcNAc...) asparagine glycans are attached at residues asparagine 94 and asparagine 101.

This sequence belongs to the alpha/beta interferon family.

The protein localises to the secreted. In terms of biological role, produced by macrophages, IFN-alpha have antiviral activities. Interferon stimulates the production of two enzymes: a protein kinase and an oligoadenylate synthetase. The sequence is that of Interferon alpha-3 from Canis lupus familiaris (Dog).